Consider the following 149-residue polypeptide: DnaJ homolog subfamily C member 24 (149 aa).

The 72-residue stretch at 11–82 (DWYSILGADP…ETKREYDLQR (72 aa)) folds into the J domain. The DPH-type MB domain maps to 93–148 (VDAQVYLEEMSWNEGDHSFYLSCRCGGKYSVSKDEAEEVSLISCDTCSLIIELLHY). Residues Cys115, Cys117, Cys136, and Cys139 each coordinate Zn(2+).

This sequence belongs to the DPH4 family. As to quaternary structure, monomer and homooligomer. Iron binding promotes oligomerization.

The protein localises to the cytoplasm. Its subcellular location is the cytoskeleton. It functions in the pathway protein modification; peptidyl-diphthamide biosynthesis. Functionally, stimulates the ATPase activity of several Hsp70-type chaperones. This ability is enhanced by iron-binding. The iron-bound form is redox-active and can function as electron carrier. Plays a role in the diphthamide biosynthesis, a post-translational modification of histidine which occurs in translation elongation factor 2 (EEF2) which can be ADP-ribosylated by diphtheria toxin and by Pseudomonas exotoxin A (Eta). The protein is DnaJ homolog subfamily C member 24 of Homo sapiens (Human).